The chain runs to 821 residues: Putative outer membrane usher protein YqiG (821 aa).

An N-terminal signal peptide occupies residues 1 to 20; it reads MSGNIGANPVIIIGCASAYA. The cysteines at positions 798 and 817 are disulfide-linked.

It belongs to the fimbrial export usher family.

The protein resides in the cell outer membrane. In terms of biological role, may be involved in H(2) production during fermentative growth. Involved in the export and assembly of a fimbrial subunit across the outer membrane. In Escherichia coli (strain K12), this protein is Putative outer membrane usher protein YqiG (yqiG).